Reading from the N-terminus, the 257-residue chain is MSVPLILTLLAGAATFIGAFLAVLGQKPSNRVLAFSLGFAAGIMLLISLMEMLPAALAVEGMSPVLGYGMFIIGLLGYFGLDRMLPHAHPQDLMQKTQQPLPKSIRRTAILLTLGISLHNFPEGIATFVTASSNLELGMGIALAVALHNIPEGLAVAGPVYAATGSKRTAIFWAGISGMAEILGGVLAWLILGSLISPVVMAAVMAAVAGIMVALSVDELMPLAKEIDPNNNPSYGVLCGMSVMGLSLVVLQTAGIG.

5 helical membrane passes run 5-25, 32-52, 61-81, 109-129, and 137-157; these read LILT…AVLG, VLAF…LMEM, GMSP…YFGL, AILL…ATFV, and LGMG…LAVA. The Fe(2+) site is built by Asn-120 and Glu-123. 2 residues coordinate Zn(2+): Glu-123 and His-148. Residues Asn-149, Glu-152, and Glu-181 each coordinate Fe(2+). Position 152 (Glu-152) interacts with Zn(2+). A run of 3 helical transmembrane segments spans residues 182 to 202, 203 to 223, and 236 to 256; these read ILGG…VVMA, AVMA…LMPL, and GVLC…TAGI.

This sequence belongs to the ZIP transporter (TC 2.A.5) family. ZupT subfamily.

Its subcellular location is the cell inner membrane. The catalysed reaction is Zn(2+)(in) = Zn(2+)(out). Mediates zinc uptake. May also transport other divalent cations. The polypeptide is Zinc transporter ZupT (Escherichia fergusonii (strain ATCC 35469 / DSM 13698 / CCUG 18766 / IAM 14443 / JCM 21226 / LMG 7866 / NBRC 102419 / NCTC 12128 / CDC 0568-73)).